The primary structure comprises 258 residues: Axonemal dynein light intermediate polypeptide 1 (258 aa).

Disordered regions lie at residues Met1–Asp60 and Val207–Lys231. Low complexity predominate over residues Ser34–Ala44. The stretch at Met176–Ala255 forms a coiled coil.

Belongs to the inner dynein arm light chain family. Interacts with CFAP45. Interacts with DYNC1H1. Expressed in many tissues. A smaller 0.9 kb and a larger 2.5 kb transcripts were detected at the highest level in the testis, at medium levels in the prostate, heart, liver, lung and pancreas, at low levels in the ovary, skeletal muscle and small intestine. Not detected in spleen, colon epithelium, thymus or peripheral blood leukocytes. The 0.9 kb transcript is expressed at a 20-fold higher level than the 2.5 kb transcript in the testis. Expressed in spermatozoa and airway epithelial cells (at protein level).

The protein localises to the cell projection. It localises to the cilium. It is found in the flagellum. The protein resides in the dynein axonemal particle. Its subcellular location is the cytoplasm. In terms of biological role, involved in sperm flagellum assembly. This is Axonemal dynein light intermediate polypeptide 1 from Homo sapiens (Human).